A 299-amino-acid polypeptide reads, in one-letter code: Maintenance of mitochondrial morphology protein 1 (299 aa).

At 1-15 (MTNIIFSLQPTFTQG) the chain is on the lumenal side. The helical transmembrane segment at 16–36 (LILGQLSVLVLLGLILKYLFL) threads the bilayer. The Cytoplasmic portion of the chain corresponds to 37-299 (DSTKNPFETT…QEESKRQEEA (263 aa)). The interval 47-68 (SYHPQFDRKPARKQQAQDSQSQ) is disordered. The SMP-LTD domain maps to 73–281 (DVESLDWFNL…LPGLASVAEA (209 aa)).

This sequence belongs to the MMM1 family. In terms of assembly, homodimer. Component of the ER-mitochondria encounter structure (ERMES) or MDM complex, composed of MMM1, MDM10, MDM12 and MDM34. An MMM1 homodimer associates with one molecule of MDM12 on each side in a pairwise head-to-tail manner, and the SMP-LTD domains of MMM1 and MDM12 generate a continuous hydrophobic tunnel for phospholipid trafficking.

The protein resides in the endoplasmic reticulum membrane. Component of the ERMES/MDM complex, which serves as a molecular tether to connect the endoplasmic reticulum (ER) and mitochondria. Components of this complex are involved in the control of mitochondrial shape and protein biogenesis, and function in nonvesicular lipid trafficking between the ER and mitochondria. The MDM12-MMM1 subcomplex functions in the major beta-barrel assembly pathway that is responsible for biogenesis of all outer membrane beta-barrel proteins, and acts in a late step after the SAM complex. The MDM10-MDM12-MMM1 subcomplex further acts in the TOM40-specific pathway after the action of the MDM12-MMM1 complex. Essential for establishing and maintaining the structure of mitochondria and maintenance of mtDNA nucleoids. The polypeptide is Maintenance of mitochondrial morphology protein 1 (Coprinopsis cinerea (strain Okayama-7 / 130 / ATCC MYA-4618 / FGSC 9003) (Inky cap fungus)).